Consider the following 359-residue polypeptide: Probable L-ascorbate peroxidase 7, chloroplastic (359 aa).

The transit peptide at 1–71 (MAAQRLAALH…KAAGSGRSVM (71 aa)) directs the protein to the chloroplast. The active-site Proton acceptor is His118. His247 serves as a coordination point for heme b. Thr248 is a K(+) binding site. The segment at 251–277 (RSRPERSGWGKPETKYTKNGPGAPGGQ) is disordered. The span at 252-266 (SRPERSGWGKPETKY) shows a compositional bias: basic and acidic residues. The K(+) site is built by Thr280 and Asp287.

The protein belongs to the peroxidase family. Ascorbate peroxidase subfamily. The cofactor is heme b. Expressed in roots, leaves, stems and flowers.

The protein resides in the plastid. The protein localises to the chloroplast stroma. It catalyses the reaction L-ascorbate + H2O2 = L-dehydroascorbate + 2 H2O. Functionally, plays a key role in hydrogen peroxide removal. This chain is Probable L-ascorbate peroxidase 7, chloroplastic, found in Oryza sativa subsp. japonica (Rice).